The following is a 362-amino-acid chain: UDP-galactose transporter homolog 1 (362 aa).

A run of 5 helical transmembrane segments spans residues Ile7–Val27, Cys45–Met65, Leu111–Ile131, Ser141–Gly161, and Phe175–Thr195. N-linked (GlcNAc...) asparagine glycosylation is present at Asn196. Helical transmembrane passes span His234–Ile254, Ile271–Phe291, Leu296–Leu316, and Ser317–Phe337.

This sequence belongs to the nucleotide-sugar transporter family. SLC35B subfamily.

The protein resides in the endoplasmic reticulum membrane. In terms of biological role, may be involved in specific transport of UDP-Gal from the cytosol to the Golgi lumen. Involved in the maintenance of optimal conditions for the folding of secretory pathway proteins in the endoplasmic reticulum. In Candida glabrata (strain ATCC 2001 / BCRC 20586 / JCM 3761 / NBRC 0622 / NRRL Y-65 / CBS 138) (Yeast), this protein is UDP-galactose transporter homolog 1 (HUT1).